The chain runs to 374 residues: 2-aminoethylphosphonate--pyruvate transaminase 1 (374 aa).

Residue K195 is modified to N6-(pyridoxal phosphate)lysine.

It belongs to the class-V pyridoxal-phosphate-dependent aminotransferase family. PhnW subfamily. As to quaternary structure, homodimer. It depends on pyridoxal 5'-phosphate as a cofactor.

The catalysed reaction is (2-aminoethyl)phosphonate + pyruvate = phosphonoacetaldehyde + L-alanine. In terms of biological role, involved in phosphonate degradation. In Polaromonas sp. (strain JS666 / ATCC BAA-500), this protein is 2-aminoethylphosphonate--pyruvate transaminase 1.